The sequence spans 248 residues: Phosphoribosylaminoimidazole-succinocarboxamide synthase (248 aa).

This sequence belongs to the SAICAR synthetase family.

The enzyme catalyses 5-amino-1-(5-phospho-D-ribosyl)imidazole-4-carboxylate + L-aspartate + ATP = (2S)-2-[5-amino-1-(5-phospho-beta-D-ribosyl)imidazole-4-carboxamido]succinate + ADP + phosphate + 2 H(+). The protein operates within purine metabolism; IMP biosynthesis via de novo pathway; 5-amino-1-(5-phospho-D-ribosyl)imidazole-4-carboxamide from 5-amino-1-(5-phospho-D-ribosyl)imidazole-4-carboxylate: step 1/2. This Methanothermobacter thermautotrophicus (strain ATCC 29096 / DSM 1053 / JCM 10044 / NBRC 100330 / Delta H) (Methanobacterium thermoautotrophicum) protein is Phosphoribosylaminoimidazole-succinocarboxamide synthase (purC).